Consider the following 526-residue polypeptide: Zinc finger protein Helios (526 aa).

The segment at 28 to 94 (DLTSSTPNGQ…IESSEVADNR (67 aa)) is disordered. Polar residues predominate over residues 29 to 50 (LTSSTPNGQHASPSHMTSTNSV). A Phosphoserine modification is found at Ser56. Over residues 61–77 (DRQPLSREDEIRGHDEG) the composition is skewed to basic and acidic residues. Phosphoserine occurs at positions 78 and 79. A Glycyl lysine isopeptide (Lys-Gly) (interchain with G-Cter in SUMO2) cross-link involves residue Lys95. 4 C2H2-type zinc fingers span residues 112–134 (LKCDVCGMVCIGPNVLMVHKRSH), 140–162 (FHCNQCGASFTQKGNLLRHIKLH), 168–190 (FKCPFCSYACRRRDALTGHLRTH), and 196–219 (HKCNYCGRSYKQRSSLEEHKERCH). Lys288 bears the N6-acetyllysine mark. Over residues 368–379 (ISRETSDSHENN) the composition is skewed to basic and acidic residues. A disordered region spans residues 368–435 (ISRETSDSHE…LNPKRKQSPA (68 aa)). Glycyl lysine isopeptide (Lys-Gly) (interchain with G-Cter in SUMO2) cross-links involve residues Lys442 and Lys448. 2 C2H2-type zinc fingers span residues 471-493 (FKCEHCRVLFLDHVMYTIHMGCH) and 499-523 (LECNICGYRSQDRYEFSSHIVRGEH).

This sequence belongs to the Ikaros C2H2-type zinc-finger protein family. Can form homodimers. Interacts with IKZF4 and IKZF5. As to expression, expressed in outer hair cells (OHC) of the organ of Corti. Abundant in thymus, low expression in bone marrow and brain and no detectable expression in spleen, liver, kidney or muscle. Expressed in T-cells.

It localises to the nucleus. In terms of biological role, transcriptional regulator required for outer hair cells (OHC) maturation and, consequently, for hearing. This chain is Zinc finger protein Helios (Ikzf2), found in Mus musculus (Mouse).